A 146-amino-acid chain; its full sequence is VHLTAEEKDAVLGLWGKVNVQEVGGEALGRLLVVYPWTQRFFESFGDLSSADAVMNNPKVKAHGKKVLDSFADGLKHLDNLKGTFAALSELHCDQLHVDPENFRLLGNELVVVLARTFGKEFTPELQAAYQKVVAGVANALAHRYH.

N-acetylvaline is present on Val-1. A Globin domain is found at 2 to 146 (HLTAEEKDAV…VANALAHRYH (145 aa)). Ser-44 is modified (phosphoserine). Lys-59 carries the post-translational modification N6-acetyllysine. Residue His-63 coordinates heme b. An N6-acetyllysine modification is found at Lys-82. His-92 lines the heme b pocket. Cys-93 bears the S-nitrosocysteine mark.

The protein belongs to the globin family. As to quaternary structure, heterotetramer of two alpha chains and two beta chains. As to expression, red blood cells.

Involved in oxygen transport from the lung to the various peripheral tissues. The polypeptide is Hemoglobin subunit beta (HBB) (Hippopotamus amphibius (Hippopotamus)).